The chain runs to 34 residues: Mu-theraphotoxin-CCy1a (34 aa).

3 disulfides stabilise this stretch: Cys3–Cys18, Cys10–Cys23, and Cys17–Cys30.

The protein belongs to the neurotoxin 10 (Hwtx-1) family. 14 (Hntx-1) subfamily. As to expression, expressed by the venom gland.

The protein resides in the secreted. Functionally, voltage-gated sodium channel Nav1.7/SCN9A inhibitor. The chain is Mu-theraphotoxin-CCy1a from Chromatopelma cyaneopubescens (Greenbottle blue tarantula).